Reading from the N-terminus, the 323-residue chain is tRNA dimethylallyltransferase (323 aa).

18 to 25 contributes to the ATP binding site; the sequence is GPTASGKS. 20-25 is a substrate binding site; that stretch reads TASGKS. Interaction with substrate tRNA stretches follow at residues 43–46, 167–171, and 249–254; these read DSAQ, QRIQR, and RCVGYR.

The protein belongs to the IPP transferase family. As to quaternary structure, monomer. Requires Mg(2+) as cofactor.

It catalyses the reaction adenosine(37) in tRNA + dimethylallyl diphosphate = N(6)-dimethylallyladenosine(37) in tRNA + diphosphate. Functionally, catalyzes the transfer of a dimethylallyl group onto the adenine at position 37 in tRNAs that read codons beginning with uridine, leading to the formation of N6-(dimethylallyl)adenosine (i(6)A). This Nitrosospira multiformis (strain ATCC 25196 / NCIMB 11849 / C 71) protein is tRNA dimethylallyltransferase.